The following is a 970-amino-acid chain: Protein translocase subunit SecA (970 aa).

ATP contacts are provided by residues Gln99, 117–121 (GEGKT), and Asp631.

Belongs to the SecA family. Monomer and homodimer. Part of the essential Sec protein translocation apparatus which comprises SecA, SecYEG and auxiliary proteins SecDF. Other proteins may also be involved.

The protein localises to the cell inner membrane. It is found in the cytoplasm. The catalysed reaction is ATP + H2O + cellular proteinSide 1 = ADP + phosphate + cellular proteinSide 2.. Functionally, part of the Sec protein translocase complex. Interacts with the SecYEG preprotein conducting channel. Has a central role in coupling the hydrolysis of ATP to the transfer of proteins into and across the cell membrane, serving as an ATP-driven molecular motor driving the stepwise translocation of polypeptide chains across the membrane. The protein is Protein translocase subunit SecA of Chlamydia caviae (strain ATCC VR-813 / DSM 19441 / 03DC25 / GPIC) (Chlamydophila caviae).